Here is a 647-residue protein sequence, read N- to C-terminus: Carotenoid phi-ring synthase (647 aa).

Residues Ala-67, 86-87 (EA), Lys-94, and Tyr-120 contribute to the FAD site. Positions 322–416 (VASIPKREVP…VREAGEMLVI (95 aa)) constitute a Rieske domain. [2Fe-2S] cluster-binding residues include Cys-362, His-364, Cys-380, and His-383. 2 residues coordinate FAD: Asp-601 and Met-612.

This sequence belongs to the carotenoid/retinoid oxidoreductase family. FAD serves as cofactor. Requires [2Fe-2S] cluster as cofactor.

The catalysed reaction is a carotenoid beta-end derivative + 2 A = a carotenoid phi-end derivative + 2 AH2. The protein operates within carotenoid biosynthesis. Its function is as follows. Involved in the biosynthesis of chlorobactene, a carotenoid with aromatic end group. Catalyzes the introduction of two additional double bonds into the ionone ring of gamma-carotene to produce chlorobactene. The reaction includes an intramolecular methyl transfer from position C1 to position C2 of the ring. This is Carotenoid phi-ring synthase from Chlorobaculum tepidum (strain ATCC 49652 / DSM 12025 / NBRC 103806 / TLS) (Chlorobium tepidum).